A 434-amino-acid chain; its full sequence is MSTIVSVWAREILDSRGNPTVEVEVSLESGHTGRAAVPSGASTGSREALEMRDGDKGRYKGKGVEKAVDNVMGEIAEAIVGLDSLRQVQVDNTLLDLDGTDNKSRLGANAMLGVSLATARAASSFLGLPLYQYLGGVNAKVLPVPLMNIINGGAHAPNNLDIQEFMIMPIGAATFRDALRMGAETFHTLKALLAADGHVTSVGDEGGFAPNLKNHDEAFRYIMKAIEEAGYIPGAEIALAIDAAASEFHKDGKYVLAGEGKNLSNSEMVEWLGEFTTRYPLISIEDGLAEADWDGWRELTYKLGDTIQLVGDDIFVTNPDILAEGIDEGVANSILIKLNQIGTLTETLDTIEMAKQAAYTTVISHRSGETEDHFISDLAVGLNAGQIKTGSLCRSDRLAKYNQLLRIEEDLDDTGIYFGPMMSSHFGFEEEGEE.

The segment at 29 to 56 is disordered; it reads SGHTGRAAVPSGASTGSREALEMRDGDK. Positions 47-56 are enriched in basic and acidic residues; the sequence is EALEMRDGDK. Q163 serves as a coordination point for (2R)-2-phosphoglycerate. E205 (proton donor) is an active-site residue. Residues D242, E285, and D312 each coordinate Mg(2+). (2R)-2-phosphoglycerate-binding residues include K337, R366, S367, and K388. K337 serves as the catalytic Proton acceptor.

It belongs to the enolase family. Homooctamer. It depends on Mg(2+) as a cofactor.

Its subcellular location is the cytoplasm. The protein resides in the secreted. It localises to the cell surface. It catalyses the reaction (2R)-2-phosphoglycerate = phosphoenolpyruvate + H2O. Its pathway is carbohydrate degradation; glycolysis; pyruvate from D-glyceraldehyde 3-phosphate: step 4/5. Functionally, catalyzes the reversible conversion of 2-phosphoglycerate (2-PG) into phosphoenolpyruvate (PEP). It is essential for the degradation of carbohydrates via glycolysis. In Nitratidesulfovibrio vulgaris (strain DSM 19637 / Miyazaki F) (Desulfovibrio vulgaris), this protein is Enolase.